We begin with the raw amino-acid sequence, 231 residues long: 7-cyano-7-deazaguanine synthase (231 aa).

8 to 18 (FSGGQDSTTCL) is a binding site for ATP. Zn(2+) is bound by residues Cys-188, Cys-197, Cys-200, and Cys-203.

This sequence belongs to the QueC family. Requires Zn(2+) as cofactor.

The catalysed reaction is 7-carboxy-7-deazaguanine + NH4(+) + ATP = 7-cyano-7-deazaguanine + ADP + phosphate + H2O + H(+). The protein operates within purine metabolism; 7-cyano-7-deazaguanine biosynthesis. Catalyzes the ATP-dependent conversion of 7-carboxy-7-deazaguanine (CDG) to 7-cyano-7-deazaguanine (preQ(0)). This is 7-cyano-7-deazaguanine synthase from Escherichia coli O127:H6 (strain E2348/69 / EPEC).